The chain runs to 242 residues: Universal stress protein PHOS32 (242 aa).

The N-terminal 43 residues, 1-43, are a transit peptide targeting the chloroplast; that stretch reads MNPADSDHPQLPNIKIHHPPSPRHSHHHHSSSTPSSAATPTPT. The disordered stretch occupies residues 1–45; that stretch reads MNPADSDHPQLPNIKIHHPPSPRHSHHHHSSSTPSSAATPTPTAG. Basic residues predominate over residues 15–30; sequence KIHHPPSPRHSHHHHS. ATP is bound at residue Pro19. Ser21 carries the post-translational modification Phosphoserine; by MAPK3 and MAPK6. Positions 31–44 are enriched in low complexity; sequence SSTPSSAATPTPTA. Residues Val83, 168-178, and 186-188 each bind ATP; these read GSRGFGAEKKR and SVS. Ser219 carries the phosphoserine modification.

It belongs to the universal stress protein A family. Phosphorylated by MAPK3 and MAPK6 after pathogenic elicitation (e.g. bacterial flg22, Phytophthora infestans zoospores and xylanase).

It localises to the plastid. The protein resides in the chloroplast. This chain is Universal stress protein PHOS32, found in Arabidopsis thaliana (Mouse-ear cress).